The primary structure comprises 901 residues: HTH-type transcriptional regulator MalT (901 aa).

Position 39 to 46 (39 to 46) interacts with ATP; sequence SPAGYGKT. The HTH luxR-type domain occupies 829 to 894; sequence ELIRTSPLTQ…DAVQHAQQLL (66 aa). Positions 853–872 form a DNA-binding region, H-T-H motif; it reads NEQIAGELDVAATTIKTHIR.

This sequence belongs to the MalT family. Monomer in solution. Oligomerizes to an active state in the presence of the positive effectors ATP and maltotriose.

Its activity is regulated as follows. Activated by ATP and maltotriose, which are both required for DNA binding. Its function is as follows. Positively regulates the transcription of the maltose regulon whose gene products are responsible for uptake and catabolism of malto-oligosaccharides. Specifically binds to the promoter region of its target genes, recognizing a short DNA motif called the MalT box. The protein is HTH-type transcriptional regulator MalT of Klebsiella pneumoniae subsp. pneumoniae (strain ATCC 700721 / MGH 78578).